The primary structure comprises 528 residues: MLKRLQVKNFRCLEDIDLPLGPLTAIVGPNGAGKTTILRAIDLVLGDVWPSLRSFRIPQDFINFDTTRAIEITVHFDPPYTQGSFNITAFRLTCKGEDADFHVDLEPLDEGGNVPRYPSGNPLRVGTDMRNHARVLFLDHRRNLAQHLPSIRGSILGRLLQPVRREFKLQDNFKQVYEQAMDLLRTEQVKQIEKTIAETAKQMLGFLGKDAMKSMEIGFGFADPANPFNSLRLQYRESDLTLPGDELGLGIQSAIVVGIFEAFRQLGEKIGTVIIEEPEMYLHPQAQRYFYRLLCEMADKDQCQIIYSTHSPIFADVNRFEALRLVRKDRDDRVVVSYVREEDKSALDNVRNRFKLGGRFDTARNEVLFAKRALLVEGYGDRVAALQLFNQLEVDPDAECIAVVDCGGKAGIELIVGVCKALDIPFVVVHDEDVWPIDERADEETRRKQEQENKAEQEKNQRIQACAGAERVFVVQPSLEAALGIGRNASDKPYRIAEILKTVDVGQPPDALRPFVEAIRQVTRPMEE.

Positions 1–153 are ATPase domain N-terminus; sequence MLKRLQVKNF…LAQHLPSIRG (153 aa). 31–35 contributes to the ATP binding site; it reads GAGKT. The segment at 154 to 245 is dimerization domain; the sequence is SILGRLLQPV…RESDLTLPGD (92 aa). An ATPase domain C-terminus region spans residues 246-369; the sequence is ELGLGIQSAI…FDTARNEVLF (124 aa). Positions 370 to 528 are toprim domain; that stretch reads AKRALLVEGY…IRQVTRPMEE (159 aa). A divalent metal cation is bound by residues Glu-377, Asp-381, Asp-431, and Asp-433. The segment at 440 to 461 is disordered; that stretch reads RADEETRRKQEQENKAEQEKNQ. A divalent metal cation-binding residues include Ser-478 and Glu-480. Arg-487 acts as the Stabilizes transition state or protonates leaving group in catalysis.

This sequence belongs to the class 1 OLD nuclease family. Homodimer. Mg(2+) is required as a cofactor. Requires Mn(2+) as cofactor. The cofactor is Ca(2+).

It catalyses the reaction Exonucleolytic cleavage in the 5'- to 3'-direction to yield nucleoside 5'-phosphates.. In terms of biological role, an exodeoxyribonuclease that degrades linear or supercoiled dsDNA from 5'-3'. Nicks and linearizes circular DNA. Activity is not stimulated by ATP or AMP-PNP, although it has DNA-stimulated ATPase activity. The sequence is that of OLD nuclease from Thermus scotoductus (strain ATCC 700910 / SA-01).